We begin with the raw amino-acid sequence, 107 residues long: Cytochrome c2 (107 aa).

Residue Q1 is modified to Pyrrolidone carboxylic acid. Heme c is bound by residues C13, C16, H17, and M79.

This sequence belongs to the cytochrome c family. Post-translationally, binds 1 heme c group covalently per subunit.

The protein localises to the periplasm. Cytochrome c2 is found mainly in purple, non-sulfur, photosynthetic bacteria where it functions as the electron donor to the oxidized bacteriochlorophyll in the photophosphorylation pathway. However, it may also have a role in the respiratory chain and is found in some non-photosynthetic bacteria. The polypeptide is Cytochrome c2 (Rhodoplanes tepidamans (Rhodoplanes cryptolactis)).